The chain runs to 564 residues: MEFVIGLLALFLILFATGYLFRKNIYKEIDRLEAWKIEIMNRSIVEEMSKIKHLKMTGQTEEFFERWRREWDEIVTSHMPKVEELLFEAEDCADKYRFQKSKQVLAHIENLLSAAESNIEDILKEIADLVSSEEQNRKEIEEVKERYTKVRKNLLAYSHLYGDLYAKIEADLDTVWEGIKQFEEETEGGNYIEARKVLLAQDRLLEELQSYIDDVPKLLASCKQTVPQEIAKLKAGYQEMIDKGYKLDHIQVEKELENLLKELKRAEDALLDELDLEEAAAIVQIIDETIQTLYNQLEHEVEAGQEILGKVPELAAALEKLEASKKDTEAETELVKKGYRLTTGELEKQQSYEKRLEMIEKQFEQVRERLDQKHVAYSLLKEELADIEKQMEAAQREHDEYRDMLQMLRKEELQARELLKQLKQTIKDTARSLEKSNVPGIPEAITEKIRQSQTTVQKVTEQLNELPLNMDAVNERLQEAEQLVTEVKTKTDELVELVLLIERIIQYGNRFRSQDRILSEQLKEAENCFYAYQYEEAYDIAARAVEKASPGAVARLEADAKQPE.

The Extracellular segment spans residues 1 to 2 (ME). Residues 3–21 (FVIGLLALFLILFATGYLF) form a helical membrane-spanning segment. The Cytoplasmic portion of the chain corresponds to 22-564 (RKNIYKEIDR…RLEADAKQPE (543 aa)). 3 coiled-coil regions span residues 99–159 (QKSK…AYSH), 243–281 (KGYKLDHIQVEKELENLLKELKRAEDALLDELDLEEAAA), and 310–498 (KVPE…VELV).

Belongs to the EzrA family.

It localises to the cell membrane. Functionally, negative regulator of FtsZ ring formation; modulates the frequency and position of FtsZ ring formation. Inhibits FtsZ ring formation at polar sites. Interacts either with FtsZ or with one of its binding partners to promote depolymerization. The protein is Septation ring formation regulator EzrA of Bacillus licheniformis (strain ATCC 14580 / DSM 13 / JCM 2505 / CCUG 7422 / NBRC 12200 / NCIMB 9375 / NCTC 10341 / NRRL NRS-1264 / Gibson 46).